Here is a 145-residue protein sequence, read N- to C-terminus: Cuticle protein 5 (145 aa).

This is Cuticle protein 5 from Blaberus craniifer (Death's head cockroach).